Reading from the N-terminus, the 55-residue chain is Large ribosomal subunit protein bL33 (55 aa).

The protein belongs to the bacterial ribosomal protein bL33 family.

This is Large ribosomal subunit protein bL33 from Dinoroseobacter shibae (strain DSM 16493 / NCIMB 14021 / DFL 12).